A 98-amino-acid chain; its full sequence is NADH-ubiquinone oxidoreductase chain 4L (98 aa).

Transmembrane regions (helical) follow at residues Met1–Ile21, Leu26–Leu46, and Leu61–Val81.

This sequence belongs to the complex I subunit 4L family. As to quaternary structure, core subunit of respiratory chain NADH dehydrogenase (Complex I) which is composed of 45 different subunits.

Its subcellular location is the mitochondrion inner membrane. The catalysed reaction is a ubiquinone + NADH + 5 H(+)(in) = a ubiquinol + NAD(+) + 4 H(+)(out). Functionally, core subunit of the mitochondrial membrane respiratory chain NADH dehydrogenase (Complex I) which catalyzes electron transfer from NADH through the respiratory chain, using ubiquinone as an electron acceptor. Part of the enzyme membrane arm which is embedded in the lipid bilayer and involved in proton translocation. This Nycticebus coucang (Slow loris) protein is NADH-ubiquinone oxidoreductase chain 4L (MT-ND4L).